A 728-amino-acid polypeptide reads, in one-letter code: Catalase-peroxidase 1 (728 aa).

Residues 91–218 (WHSAGTYRTA…LAAVQMGLIY (128 aa)) constitute a cross-link (tryptophyl-tyrosyl-methioninium (Trp-Tyr) (with M-244)). His-92 functions as the Proton acceptor in the catalytic mechanism. A cross-link (tryptophyl-tyrosyl-methioninium (Tyr-Met) (with W-91)) is located at residues 218–244 (YVNPEGPDGNPDPVAAAHDIRETFARM). His-259 is a binding site for heme b.

It belongs to the peroxidase family. Peroxidase/catalase subfamily. As to quaternary structure, homodimer or homotetramer. The cofactor is heme b. In terms of processing, formation of the three residue Trp-Tyr-Met cross-link is important for the catalase, but not the peroxidase activity of the enzyme.

It catalyses the reaction H2O2 + AH2 = A + 2 H2O. The catalysed reaction is 2 H2O2 = O2 + 2 H2O. Functionally, bifunctional enzyme with both catalase and broad-spectrum peroxidase activity. This Burkholderia cenocepacia (strain HI2424) protein is Catalase-peroxidase 1.